The sequence spans 187 residues: Nodulin-related protein 1 (187 aa).

N-acetylmethionine is present on Met1. Disordered regions lie at residues 1-66 and 132-176; these read MDFF…ATNA and YETS…HGFG. A compositionally biased stretch (basic and acidic residues) spans 7 to 48; it reads QVKKKFSDKKPESSDPEPNHNKNKPGHTEPTTHKPGHGEPTT. The span at 142 to 158 shows a compositional bias: gly residues; that stretch reads GGTGSHGNVGGHGGGAG.

As to quaternary structure, interacts with RPS2. In terms of tissue distribution, expressed in roots, leaves, flowers and siliques.

Functionally, prevents accumulation of abscisic acid (ABA) after heat treatment, thus reducing thermotolerance. May be a negative regulator of the ABA signaling/synthesis pathway. Required for defense responses against avirulent bacteria such as P.syringae pv. tomato DC3000 (avrRpt2). The protein is Nodulin-related protein 1 of Arabidopsis thaliana (Mouse-ear cress).